The primary structure comprises 367 residues: Anhydro-N-acetylmuramic acid kinase (367 aa).

13 to 20 contributes to the ATP binding site; it reads GTSMDGAD.

It belongs to the anhydro-N-acetylmuramic acid kinase family.

The catalysed reaction is 1,6-anhydro-N-acetyl-beta-muramate + ATP + H2O = N-acetyl-D-muramate 6-phosphate + ADP + H(+). Its pathway is amino-sugar metabolism; 1,6-anhydro-N-acetylmuramate degradation. It participates in cell wall biogenesis; peptidoglycan recycling. Functionally, catalyzes the specific phosphorylation of 1,6-anhydro-N-acetylmuramic acid (anhMurNAc) with the simultaneous cleavage of the 1,6-anhydro ring, generating MurNAc-6-P. Is required for the utilization of anhMurNAc either imported from the medium or derived from its own cell wall murein, and thus plays a role in cell wall recycling. The polypeptide is Anhydro-N-acetylmuramic acid kinase (Neisseria meningitidis serogroup B (strain ATCC BAA-335 / MC58)).